The sequence spans 2079 residues: Non-reducing polyketide synthase Dhc5 (2079 aa).

The tract at residues 9-246 is N-terminal acylcarrier protein transacylase domain (SAT); sequence LLFGDVTDPW…DELNIHALQH (238 aa). A Ketosynthase family 3 (KS3) domain is found at 366–798; that stretch reads NDGIAIVGMA…GGNACLLLED (433 aa). Residues Cys-543, His-678, and His-717 each act as for beta-ketoacyl synthase activity in the active site. Positions 895 to 1199 are malonyl-CoA:ACP transacylase (MAT) domain; sequence VFVFTGQGSH…MTHSLQPKTS (305 aa). The For acyl/malonyl transferase activity role is filled by Ser-986. Residues 1268 to 1414 form an N-terminal hotdog fold region; sequence EPLISTCAQY…DPTRSQVEWD (147 aa). In terms of domain architecture, PKS/mFAS DH spans 1268-1584; sequence EPLISTCAQY…YQELPRATWK (317 aa). A product template (PT) domain region spans residues 1304-1581; that stretch reads MDGHKMQGIG…DIRYQELPRA (278 aa). The interval 1435–1584 is C-terminal hotdog fold; the sequence is RGHRMQPEVF…YQELPRATWK (150 aa). Residues 1613–1639 are disordered; that stretch reads RELQQPSSATVPAQETTIDEPEQQEGE. Polar residues predominate over residues 1615 to 1628; it reads LQQPSSATVPAQET. Positions 1641-1718 constitute a Carrier domain; sequence AAGARLFNAI…DLRKEFRANE (78 aa). Ser-1678 is subject to O-(pantetheine 4'-phosphoryl)serine. Residues 1721–1784 are disordered; the sequence is VENPRFSATP…EQKRPVKIDD (64 aa). Residues 1727–1757 show a composition bias toward low complexity; the sequence is SATPSSAEASIPSSPSSLAHPMSDSASSLSP. Positions 1758-1784 are enriched in basic and acidic residues; the sequence is SDREEALPLERQSMTKREQKRPVKIDD. A thioesterase (TE) domain region spans residues 1812-2057; the sequence is ADGTGTIATY…LSVAGDHLDL (246 aa). Catalysis depends on His-2064, which acts as the For thioesterase activity.

It participates in mycotoxin biosynthesis. Its function is as follows. Highly reducing polyketide synthase; part of the gene cluster that mediates the biosynthesis of 10,11-dehydrocurvularin, a prevalent fungal phytotoxin with heat shock response and immune-modulatory activities. The highly reducing polyketide synthase Dhc3 is responsible for biosynthesis up to the tetraketide stage. The non-reducing polyketide synthase Dhc5 then conducts four additional chain extension cycles, producing the unreduced part of the nascent octaketide from C-1 to C-8 in 10,11-dehydrocurvularin. This is Non-reducing polyketide synthase Dhc5 from Alternaria cinerariae.